Consider the following 277-residue polypeptide: Glycerol-3-phosphate acyltransferase (277 aa).

5 helical membrane-spanning segments follow: residues Leu3–Val23, Ile55–Leu75, Pro79–Phe99, Ile111–Leu131, and Leu155–Leu175. The tract at residues Ser207–Glu277 is disordered. Residues Phe216–Lys239 show a composition bias toward basic and acidic residues. 2 stretches are compositionally biased toward basic residues: residues Lys240 to Thr253 and Lys262 to Lys271.

This sequence belongs to the PlsY family. In terms of assembly, probably interacts with PlsX.

The protein resides in the cell inner membrane. It carries out the reaction an acyl phosphate + sn-glycerol 3-phosphate = a 1-acyl-sn-glycero-3-phosphate + phosphate. Its pathway is lipid metabolism; phospholipid metabolism. Catalyzes the transfer of an acyl group from acyl-phosphate (acyl-PO(4)) to glycerol-3-phosphate (G3P) to form lysophosphatidic acid (LPA). This enzyme utilizes acyl-phosphate as fatty acyl donor, but not acyl-CoA or acyl-ACP. In Legionella pneumophila (strain Paris), this protein is Glycerol-3-phosphate acyltransferase.